The sequence spans 689 residues: Elongation factor G (689 aa).

Residues A9–L283 enclose the tr-type G domain. Residues A18–T25, D82–H86, and N136–D139 each bind GTP.

The protein belongs to the TRAFAC class translation factor GTPase superfamily. Classic translation factor GTPase family. EF-G/EF-2 subfamily.

The protein localises to the cytoplasm. In terms of biological role, catalyzes the GTP-dependent ribosomal translocation step during translation elongation. During this step, the ribosome changes from the pre-translocational (PRE) to the post-translocational (POST) state as the newly formed A-site-bound peptidyl-tRNA and P-site-bound deacylated tRNA move to the P and E sites, respectively. Catalyzes the coordinated movement of the two tRNA molecules, the mRNA and conformational changes in the ribosome. The protein is Elongation factor G of Clostridium botulinum (strain Okra / Type B1).